A 484-amino-acid polypeptide reads, in one-letter code: tRNA sulfurtransferase (484 aa).

Positions Pro61–Arg165 constitute a THUMP domain. ATP is bound by residues Leu183 to Ile184, Lys265, Gly287, and Gln296. A disulfide bridge connects residues Cys344 and Cys456. One can recognise a Rhodanese domain in the interval Leu404–Pro483. Cys456 (cysteine persulfide intermediate) is an active-site residue.

This sequence belongs to the ThiI family.

It is found in the cytoplasm. The catalysed reaction is [ThiI sulfur-carrier protein]-S-sulfanyl-L-cysteine + a uridine in tRNA + 2 reduced [2Fe-2S]-[ferredoxin] + ATP + H(+) = [ThiI sulfur-carrier protein]-L-cysteine + a 4-thiouridine in tRNA + 2 oxidized [2Fe-2S]-[ferredoxin] + AMP + diphosphate. The enzyme catalyses [ThiS sulfur-carrier protein]-C-terminal Gly-Gly-AMP + S-sulfanyl-L-cysteinyl-[cysteine desulfurase] + AH2 = [ThiS sulfur-carrier protein]-C-terminal-Gly-aminoethanethioate + L-cysteinyl-[cysteine desulfurase] + A + AMP + 2 H(+). It participates in cofactor biosynthesis; thiamine diphosphate biosynthesis. Its function is as follows. Catalyzes the ATP-dependent transfer of a sulfur to tRNA to produce 4-thiouridine in position 8 of tRNAs, which functions as a near-UV photosensor. Also catalyzes the transfer of sulfur to the sulfur carrier protein ThiS, forming ThiS-thiocarboxylate. This is a step in the synthesis of thiazole, in the thiamine biosynthesis pathway. The sulfur is donated as persulfide by IscS. The sequence is that of tRNA sulfurtransferase from Haemophilus ducreyi (strain 35000HP / ATCC 700724).